We begin with the raw amino-acid sequence, 417 residues long: Odorant receptor Or1 (417 aa).

Residues Met-1 to Lys-2 are Cytoplasmic-facing. A helical transmembrane segment spans residues Leu-3–Leu-23. The Extracellular portion of the chain corresponds to Leu-24–Tyr-45. Residues Ile-46–Leu-66 traverse the membrane as a helical segment. The Cytoplasmic segment spans residues Tyr-67–Asp-73. Residues Ile-74 to Leu-94 form a helical membrane-spanning segment. At Glu-95–Gly-133 the chain is on the extracellular side. Asn-112 carries N-linked (GlcNAc...) asparagine glycosylation. A helical membrane pass occupies residues Val-134–Met-154. Residues Ser-155 to Asp-178 are Cytoplasmic-facing. Residues Ile-179–Asn-199 form a helical membrane-spanning segment. Topologically, residues Phe-200 to Asp-284 are extracellular. The chain crosses the membrane as a helical span at residues Ile-285–Leu-305. Over Leu-306–Asp-317 the chain is Cytoplasmic. The helical transmembrane segment at Leu-318–Val-338 threads the bilayer. Residues Gly-339–Glu-417 lie on the Extracellular side of the membrane.

It belongs to the insect chemoreceptor superfamily. Heteromeric odorant receptor channel (TC 1.A.69) family. Or2a subfamily. Female-specific antennae and maxillary palp expression.

It is found in the cell membrane. Odorant receptor which plays a critical role in the anthropophilic host-seeking behavior; establishes the host preference to transmit malaria. May participate in the phenomenon of decreased host-seeking behavior in disease vector mosquitoes after blood feeding. This Anopheles gambiae (African malaria mosquito) protein is Odorant receptor Or1 (OR1).